The sequence spans 78 residues: Acyl carrier protein (78 aa).

The Carrier domain maps to 1 to 77 (MSEVEKKVID…DAIDYIEKNL (77 aa)). An O-(pantetheine 4'-phosphoryl)serine modification is found at serine 37.

The protein belongs to the acyl carrier protein (ACP) family. 4'-phosphopantetheine is transferred from CoA to a specific serine of apo-ACP by AcpS. This modification is essential for activity because fatty acids are bound in thioester linkage to the sulfhydryl of the prosthetic group.

It is found in the cytoplasm. The protein operates within lipid metabolism; fatty acid biosynthesis. Carrier of the growing fatty acid chain in fatty acid biosynthesis. In Porphyromonas gingivalis (strain ATCC 33277 / DSM 20709 / CIP 103683 / JCM 12257 / NCTC 11834 / 2561), this protein is Acyl carrier protein.